A 700-amino-acid polypeptide reads, in one-letter code: Methionine--tRNA ligase (700 aa).

The 'HIGH' region signature appears at 14-24 (PYANGPVHLGH). Residues C146, C149, C159, and C162 each contribute to the Zn(2+) site. The 'KMSKS' region signature appears at 344-348 (KFSKS). K347 serves as a coordination point for ATP. One can recognise a tRNA-binding domain in the interval 599-700 (DFLKVDLRVA…GEEINGRQIQ (102 aa)).

Belongs to the class-I aminoacyl-tRNA synthetase family. MetG type 1 subfamily. In terms of assembly, homodimer. Zn(2+) serves as cofactor.

Its subcellular location is the cytoplasm. It catalyses the reaction tRNA(Met) + L-methionine + ATP = L-methionyl-tRNA(Met) + AMP + diphosphate. Functionally, is required not only for elongation of protein synthesis but also for the initiation of all mRNA translation through initiator tRNA(fMet) aminoacylation. The protein is Methionine--tRNA ligase of Pelodictyon phaeoclathratiforme (strain DSM 5477 / BU-1).